Consider the following 489-residue polypeptide: MTFRHCVAVDLGASSGRVMLARYDSKHRTLTLREIHRFVNCLQKTDGFDTWDIDSLEKDIRLGLKKVCNEGILIDSIGIDTWGVDYVLLDKQGQRVGLPVSYRDNRTTGIMSQALVQIGKSEIYRRSGIQFLPFNTIYQLRALTKQQPELTAQVAHALLMPDYFSYRLTGEMNWEYTNATTTQLVNINTDDWDDTLLAWTGAKKGWFGRPSHPGNVIGDWICPQGNRIPVVAVASHDTASAVIASPLANKHSAYLSSGTWSLMGFESKMPYTTDEALAANITNEGGAEGRYRVLKNIMGLWLLQRVLKERRITDLPALIAQTEALPACRFLINPNDDRFINPDDMRAEIQAACRETDQPVPVSDAELARCIFDSLALLYADILHELANLRGEKFTQLHIVGGGCQNALLNQLCADACGIRVMAGPVEASTLGNIGIQLMTLDELNNVDDFRQVVSANYDLTTYIPNPDSEIARHVAQFQPKRQTKELCA.

13-17 (ASSGR) provides a ligand contact to ATP. Residues Cys-68 and Cys-222 are joined by a disulfide bond. Residues Gly-83 and 236–238 (HDT) contribute to the substrate site. The active-site Proton acceptor is the Asp-237. Thr-259 lines the ATP pocket. Asn-296 contributes to the substrate binding site. Gln-304 contacts ATP. An intrachain disulfide couples Cys-353 to Cys-370. Residue Gly-402 coordinates ATP. Cys-413 and Cys-417 are joined by a disulfide.

Belongs to the rhamnulokinase family. It depends on Mg(2+) as a cofactor.

The catalysed reaction is L-rhamnulose + ATP = L-rhamnulose 1-phosphate + ADP + H(+). Its pathway is carbohydrate degradation; L-rhamnose degradation; glycerone phosphate from L-rhamnose: step 2/3. Functionally, involved in the catabolism of L-rhamnose (6-deoxy-L-mannose). Catalyzes the transfer of the gamma-phosphate group from ATP to the 1-hydroxyl group of L-rhamnulose to yield L-rhamnulose 1-phosphate. The chain is Rhamnulokinase from Salmonella schwarzengrund (strain CVM19633).